The sequence spans 421 residues: Thymidine phosphorylase (421 aa).

Belongs to the thymidine/pyrimidine-nucleoside phosphorylase family. In terms of assembly, homodimer.

It catalyses the reaction thymidine + phosphate = 2-deoxy-alpha-D-ribose 1-phosphate + thymine. In terms of biological role, the enzymes which catalyze the reversible phosphorolysis of pyrimidine nucleosides are involved in the degradation of these compounds and in their utilization as carbon and energy sources, or in the rescue of pyrimidine bases for nucleotide synthesis. The sequence is that of Thymidine phosphorylase (deoA) from Mycoplasma genitalium (strain ATCC 33530 / DSM 19775 / NCTC 10195 / G37) (Mycoplasmoides genitalium).